Consider the following 382-residue polypeptide: MARDYYGLLGVSKNASDADIKRAYRKLARELHPDVNPDEAAQAKFKEISVAYEVLSDPDKRRIVDLGGDPLESAAAGGNGFGGFGGLGDVFEAFFGGGFGGGAASRGPIGRVRPGSDSLLRMRLDLEECATGVTKQVTVDTAVLCDRCQGKGTNGDSVPIPCDTCGGRGEVQTVQRSLLGQMLTSRPCPTCRGVGVVIPDPCQQCMGDGRIRARREISVKIPAGVGDGMRVRLAAQGEVGPGGGPAGDLYVEVHEQAHDVFVREGDHLHCTVSVPMVDAALGVTVTVDAILDGLSEITIPPGTQPGSVITLRGRGMPHLRSNTRGDLHVHVEVVVPTRLDHQDIELLRELKGRRDREVAEVRSTHAAAGGLFSRLRETFTGR.

Positions D4–G68 constitute a J domain. The CR-type zinc finger occupies G132–R214. The Zn(2+) site is built by C145, C148, C162, C165, C188, C191, C202, and C205. CXXCXGXG motif repeat units lie at residues C145–G152, C162–G169, C188–G195, and C202–G209.

The protein belongs to the DnaJ family. In terms of assembly, homodimer. Interacts with RNase J. The cofactor is Zn(2+).

It localises to the cytoplasm. Participates actively in the response to hyperosmotic and heat shock by preventing the aggregation of stress-denatured proteins and by disaggregating proteins, also in an autonomous, DnaK-independent fashion. Unfolded proteins bind initially to DnaJ; upon interaction with the DnaJ-bound protein, DnaK hydrolyzes its bound ATP, resulting in the formation of a stable complex. GrpE releases ADP from DnaK; ATP binding to DnaK triggers the release of the substrate protein, thus completing the reaction cycle. Several rounds of ATP-dependent interactions between DnaJ, DnaK and GrpE are required for fully efficient folding. Also involved, together with DnaK and GrpE, in the DNA replication of plasmids through activation of initiation proteins. Inhibits the beta-lactamase and RNase activity of RNase J. This Mycobacterium tuberculosis (strain ATCC 25618 / H37Rv) protein is Chaperone protein DnaJ 2.